A 96-amino-acid polypeptide reads, in one-letter code: Putative septation protein SpoVG (96 aa).

Belongs to the SpoVG family.

Functionally, essential for sporulation. Interferes with or is a negative regulator of the pathway leading to asymmetric septation. The chain is Putative septation protein SpoVG from Priestia megaterium (Bacillus megaterium).